A 297-amino-acid chain; its full sequence is Formamidopyrimidine-DNA glycosylase (297 aa).

P2 serves as the catalytic Schiff-base intermediate with DNA. E3 functions as the Proton donor in the catalytic mechanism. K58 functions as the Proton donor; for beta-elimination activity in the catalytic mechanism. The DNA site is built by H104, R127, and K170. Residues 261 to 297 (SVYDREGKPCRKEGCSGTIQRFVQGGRSTFYCPICQR) form an FPG-type zinc finger. R287 (proton donor; for delta-elimination activity) is an active-site residue.

It belongs to the FPG family. As to quaternary structure, monomer. Zn(2+) is required as a cofactor.

It catalyses the reaction Hydrolysis of DNA containing ring-opened 7-methylguanine residues, releasing 2,6-diamino-4-hydroxy-5-(N-methyl)formamidopyrimidine.. The catalysed reaction is 2'-deoxyribonucleotide-(2'-deoxyribose 5'-phosphate)-2'-deoxyribonucleotide-DNA = a 3'-end 2'-deoxyribonucleotide-(2,3-dehydro-2,3-deoxyribose 5'-phosphate)-DNA + a 5'-end 5'-phospho-2'-deoxyribonucleoside-DNA + H(+). Involved in base excision repair of DNA damaged by oxidation or by mutagenic agents. Acts as a DNA glycosylase that recognizes and removes damaged bases. Has a preference for oxidized purines, such as 7,8-dihydro-8-oxoguanine (8-oxoG). Has AP (apurinic/apyrimidinic) lyase activity and introduces nicks in the DNA strand. Cleaves the DNA backbone by beta-delta elimination to generate a single-strand break at the site of the removed base with both 3'- and 5'-phosphates. This chain is Formamidopyrimidine-DNA glycosylase, found in Chelativorans sp. (strain BNC1).